The sequence spans 195 residues: Cysteine/O-acetylserine efflux protein (195 aa).

Over 1-7 (MTPTLLS) the chain is Periplasmic. Residues 8 to 28 (AFWTYTLITAMTPGPNNILAL) form a helical membrane-spanning segment. The Cytoplasmic segment spans residues 29–46 (SSATSHGFRQSTRVLAGM). The chain crosses the membrane as a helical span at residues 47–67 (SLGFLIVMLLCAGISFSLAVI). At 68–69 (DP) the chain is on the periplasmic side. The helical transmembrane segment at 70–90 (AAVHLLSWAGAAYIVWLAWKI) threads the bilayer. Residues 91–104 (ATSPTKEDGLQAKP) lie on the Cytoplasmic side of the membrane. A helical membrane pass occupies residues 105-125 (ISFWASFALQFVNVKIILYGV). The Periplasmic segment spans residues 126–141 (TALSTFVLPQTQALSW). Residues 142–162 (VVGVSVLLAMIGTFGNVCWAL) traverse the membrane as a helical segment. The Cytoplasmic segment spans residues 163–176 (AGHLFQRLFRQYGR). Residues 177-194 (QLNIVLALLLIYCAVRIF) form a helical membrane-spanning segment. A topological domain (periplasmic) is located at residue tyrosine 195.

The protein belongs to the Rht family.

It localises to the cell inner membrane. The enzyme catalyses O-acetyl-L-serine(in) = O-acetyl-L-serine(out). It catalyses the reaction L-cysteine(in) = L-cysteine(out). Functionally, exporter of O-acetylserine (OAS) and cysteine. The chain is Cysteine/O-acetylserine efflux protein (eamB) from Escherichia coli O139:H28 (strain E24377A / ETEC).